The sequence spans 130 residues: Small ribosomal subunit protein uS8 (130 aa).

The protein belongs to the universal ribosomal protein uS8 family. In terms of assembly, part of the 30S ribosomal subunit. Contacts proteins S5 and S12.

Functionally, one of the primary rRNA binding proteins, it binds directly to 16S rRNA central domain where it helps coordinate assembly of the platform of the 30S subunit. The sequence is that of Small ribosomal subunit protein uS8 from Teredinibacter turnerae (strain ATCC 39867 / T7901).